The primary structure comprises 170 residues: Co-chaperone protein HscB homolog (170 aa).

The region spanning 5-79 (DHFSLFGLPT…RARYLCEQAG (75 aa)) is the J domain.

It belongs to the HscB family. Interacts with HscA and stimulates its ATPase activity.

Its function is as follows. Co-chaperone involved in the maturation of iron-sulfur cluster-containing proteins. Seems to help targeting proteins to be folded toward HscA. This Bordetella bronchiseptica (strain ATCC BAA-588 / NCTC 13252 / RB50) (Alcaligenes bronchisepticus) protein is Co-chaperone protein HscB homolog.